The following is a 442-amino-acid chain: Glutamate--tRNA ligase 1 (442 aa).

Residues 9 to 19 carry the 'HIGH' region motif; it reads PSPTGKLHVGN. The 'KMSKS' region motif lies at 240 to 244; it reads KLSKR. K243 lines the ATP pocket.

This sequence belongs to the class-I aminoacyl-tRNA synthetase family. Glutamate--tRNA ligase type 1 subfamily. As to quaternary structure, monomer.

The protein localises to the cytoplasm. It carries out the reaction tRNA(Glu) + L-glutamate + ATP = L-glutamyl-tRNA(Glu) + AMP + diphosphate. Its function is as follows. Catalyzes the attachment of glutamate to tRNA(Glu) in a two-step reaction: glutamate is first activated by ATP to form Glu-AMP and then transferred to the acceptor end of tRNA(Glu). The protein is Glutamate--tRNA ligase 1 of Novosphingobium aromaticivorans (strain ATCC 700278 / DSM 12444 / CCUG 56034 / CIP 105152 / NBRC 16084 / F199).